Reading from the N-terminus, the 940-residue chain is UvrABC system protein A (940 aa).

31 to 38 (GLSGSGKS) lines the ATP pocket. A C4-type zinc finger spans residues 253–280 (CPICGYSMRELEPRLFSFNNPAGACPTC). ABC transporter domains are found at residues 310-587 (WDRR…PESL) and 607-937 (ANPE…RFLK). Position 640 to 647 (640 to 647 (GVSGSGKS)) interacts with ATP. Residues 740–766 (CEACQGDGVIKVEMHFLPDIYVPCDQC) form a C4-type zinc finger.

The protein belongs to the ABC transporter superfamily. UvrA family. Forms a heterotetramer with UvrB during the search for lesions.

Its subcellular location is the cytoplasm. Functionally, the UvrABC repair system catalyzes the recognition and processing of DNA lesions. UvrA is an ATPase and a DNA-binding protein. A damage recognition complex composed of 2 UvrA and 2 UvrB subunits scans DNA for abnormalities. When the presence of a lesion has been verified by UvrB, the UvrA molecules dissociate. In terms of biological role, plays a role in recovery after DNA ADP-ribosylation. This Escherichia coli O127:H6 (strain E2348/69 / EPEC) protein is UvrABC system protein A.